A 155-amino-acid chain; its full sequence is Small ribosomal subunit protein uS17 (155 aa).

The residue at position 2 (Ala-2) is an N-acetylalanine.

This sequence belongs to the universal ribosomal protein uS17 family.

This is Small ribosomal subunit protein uS17 from Drosophila yakuba (Fruit fly).